We begin with the raw amino-acid sequence, 86 residues long: Small ribosomal subunit protein bS20 (86 aa).

This sequence belongs to the bacterial ribosomal protein bS20 family.

Binds directly to 16S ribosomal RNA. The chain is Small ribosomal subunit protein bS20 from Aliarcobacter butzleri (strain RM4018) (Arcobacter butzleri).